A 215-amino-acid chain; its full sequence is UPF0173 metal-dependent hydrolase NEQ378 (215 aa).

The protein belongs to the UPF0173 family.

The chain is UPF0173 metal-dependent hydrolase NEQ378 from Nanoarchaeum equitans (strain Kin4-M).